The sequence spans 265 residues: Osteoclast-associated immunoglobulin-like receptor (265 aa).

Residues 1–18 (MVLSLILQLSTLWPACRA) form the signal peptide. Residues 19-231 (DFTPTAPLAS…LDYTQGNLIR (213 aa)) are Extracellular-facing. 2 Ig-like domains span residues 22-115 (PTAP…SQPS) and 125-218 (QLPR…SFEG). Residue Asn-47 is glycosylated (N-linked (GlcNAc...) asparagine). Cysteines 52 and 99 form a disulfide. Asn-144 carries an N-linked (GlcNAc...) asparagine glycan. The helical transmembrane segment at 232–248 (LGLAGMVLICLGIIVTC) threads the bilayer. Residues 249–265 (DWHSRSSAFDGLLPQQN) are Cytoplasmic-facing.

It belongs to the leukocyte receptor complex/polymeric immunoglobulin receptor (PIR/LRC) family. As to expression, specifically expressed in preosteoclasts or mature osteoclasts.

It is found in the cell membrane. Functionally, regulator of osteoclastogenesis which plays an important bone-specific function in osteoclast differentiation. The polypeptide is Osteoclast-associated immunoglobulin-like receptor (Oscar) (Mus musculus (Mouse)).